The chain runs to 1366 residues: DNA-directed RNA polymerase subunit beta (1366 aa).

It belongs to the RNA polymerase beta chain family. The RNAP catalytic core consists of 2 alpha, 1 beta, 1 beta' and 1 omega subunit. When a sigma factor is associated with the core the holoenzyme is formed, which can initiate transcription.

The catalysed reaction is RNA(n) + a ribonucleoside 5'-triphosphate = RNA(n+1) + diphosphate. DNA-dependent RNA polymerase catalyzes the transcription of DNA into RNA using the four ribonucleoside triphosphates as substrates. This Polynucleobacter asymbioticus (strain DSM 18221 / CIP 109841 / QLW-P1DMWA-1) (Polynucleobacter necessarius subsp. asymbioticus) protein is DNA-directed RNA polymerase subunit beta.